A 322-amino-acid chain; its full sequence is UDP-N-acetylenolpyruvoylglucosamine reductase (322 aa).

In terms of domain architecture, FAD-binding PCMH-type spans 36–202 (RAGGPAQVLF…TSVLFEGVPG (167 aa)). R182 is an active-site residue. S231 (proton donor) is an active-site residue. The active site involves E301.

Belongs to the MurB family. It depends on FAD as a cofactor.

The protein localises to the cytoplasm. It carries out the reaction UDP-N-acetyl-alpha-D-muramate + NADP(+) = UDP-N-acetyl-3-O-(1-carboxyvinyl)-alpha-D-glucosamine + NADPH + H(+). Its pathway is cell wall biogenesis; peptidoglycan biosynthesis. In terms of biological role, cell wall formation. The polypeptide is UDP-N-acetylenolpyruvoylglucosamine reductase (Brucella melitensis biotype 2 (strain ATCC 23457)).